Consider the following 314-residue polypeptide: Malate dehydrogenase (314 aa).

NAD(+) contacts are provided by residues 11 to 16 (GSGNIG) and aspartate 35. Positions 84 and 90 each coordinate substrate. NAD(+)-binding positions include asparagine 97 and 120-122 (ITN). 2 residues coordinate substrate: asparagine 122 and arginine 153. Residue histidine 177 is the Proton acceptor of the active site.

Belongs to the LDH/MDH superfamily. MDH type 3 family.

The enzyme catalyses (S)-malate + NAD(+) = oxaloacetate + NADH + H(+). In terms of biological role, catalyzes the reversible oxidation of malate to oxaloacetate. In Rickettsia bellii (strain RML369-C), this protein is Malate dehydrogenase.